We begin with the raw amino-acid sequence, 962 residues long: Protease 3 (962 aa).

The signal sequence occupies residues 1 to 23 (MPRSTWFKALLLLVALWGPAVQA). His88 provides a ligand contact to Zn(2+). Glu91 functions as the Proton acceptor in the catalytic mechanism. Zn(2+) contacts are provided by His92 and Glu169.

It belongs to the peptidase M16 family. As to quaternary structure, monomer. Zn(2+) serves as cofactor.

It is found in the periplasm. The enzyme catalyses Preferential cleavage of 16-Tyr-|-Leu-17 and 25-Phe-|-Tyr-26 bonds of oxidized insulin B chain. Also acts on other substrates of Mw less than 7 kDa such as insulin and glucagon.. Its function is as follows. Endopeptidase that degrades small peptides of less than 7 kDa, such as glucagon and insulin. This Salmonella typhimurium (strain LT2 / SGSC1412 / ATCC 700720) protein is Protease 3 (ptrA).